The following is a 461-amino-acid chain: Ribulose bisphosphate carboxylase (461 aa).

Asn-112 is a binding site for substrate. Catalysis depends on Lys-167, which acts as the Proton acceptor. Position 169 (Lys-169) interacts with substrate. 3 residues coordinate Mg(2+): Lys-192, Asp-194, and Glu-195. Residue Lys-192 is modified to N6-carboxylysine. Catalysis depends on His-288, which acts as the Proton acceptor. The substrate site is built by Arg-289, His-322, and Ser-369.

The protein belongs to the RuBisCO large chain family. Type II subfamily. Homodimer. It depends on Mg(2+) as a cofactor.

The enzyme catalyses 2 (2R)-3-phosphoglycerate + 2 H(+) = D-ribulose 1,5-bisphosphate + CO2 + H2O. It carries out the reaction D-ribulose 1,5-bisphosphate + O2 = 2-phosphoglycolate + (2R)-3-phosphoglycerate + 2 H(+). Functionally, ruBisCO catalyzes two reactions: the carboxylation of D-ribulose 1,5-bisphosphate, the primary event in carbon dioxide fixation, as well as the oxidative fragmentation of the pentose substrate. Both reactions occur simultaneously and in competition at the same active site. In Rhodopseudomonas palustris (strain HaA2), this protein is Ribulose bisphosphate carboxylase.